The following is a 61-amino-acid chain: Truncated 3-beta hydroxy-5-ene steroid dehydrogenase homolog (61 aa).

Belongs to the 3-beta-HSD family.

This is Truncated 3-beta hydroxy-5-ene steroid dehydrogenase homolog from Variola virus (isolate Human/India/Ind3/1967) (VARV).